The sequence spans 512 residues: Catalase (512 aa).

Catalysis depends on residues His-60 and Asn-133. Tyr-344 is a heme binding site. Ser-363 bears the Phosphoserine mark. A compositionally biased stretch (basic and acidic residues) spans 488-505 (EVKKMEEKAPKPINKGEP). Residues 488–512 (EVKKMEEKAPKPINKGEPHMFQGSS) are disordered.

Belongs to the catalase family. Heme is required as a cofactor.

Its subcellular location is the peroxisome matrix. It catalyses the reaction 2 H2O2 = O2 + 2 H2O. In terms of biological role, catalyzes the degradation of hydrogen peroxide (H(2)O(2)) generated by peroxisomal oxidases to water and oxygen, thereby protecting cells from the toxic effects of hydrogen peroxide. This chain is Catalase (cta1), found in Schizosaccharomyces pombe (strain 972 / ATCC 24843) (Fission yeast).